The following is a 200-amino-acid chain: GTP cyclohydrolase 1 (200 aa).

Zn(2+) contacts are provided by C87, H90, and C158.

Belongs to the GTP cyclohydrolase I family. In terms of assembly, toroid-shaped homodecamer, composed of two pentamers of five dimers.

It carries out the reaction GTP + H2O = 7,8-dihydroneopterin 3'-triphosphate + formate + H(+). It participates in cofactor biosynthesis; 7,8-dihydroneopterin triphosphate biosynthesis; 7,8-dihydroneopterin triphosphate from GTP: step 1/1. This is GTP cyclohydrolase 1 from Xanthomonas campestris pv. campestris (strain ATCC 33913 / DSM 3586 / NCPPB 528 / LMG 568 / P 25).